The chain runs to 729 residues: Polyribonucleotide nucleotidyltransferase (729 aa).

Mg(2+) contacts are provided by D485 and D491. Positions 552 to 611 (PRITTMKVAEDKIRTIIGKGGATIKGLIESTGVSIDIDDSGVIQLFSPDKMALEEAQKQI) constitute a KH domain. Residues 621–689 (GQTYQGKVSK…KQGRVKLEWK (69 aa)) form the S1 motif domain.

It belongs to the polyribonucleotide nucleotidyltransferase family. As to quaternary structure, component of the RNA degradosome, which is a multiprotein complex involved in RNA processing and mRNA degradation. It depends on Mg(2+) as a cofactor.

Its subcellular location is the cytoplasm. It carries out the reaction RNA(n+1) + phosphate = RNA(n) + a ribonucleoside 5'-diphosphate. Involved in mRNA degradation. Catalyzes the phosphorolysis of single-stranded polyribonucleotides processively in the 3'- to 5'-direction. The protein is Polyribonucleotide nucleotidyltransferase of Legionella pneumophila (strain Corby).